Reading from the N-terminus, the 454-residue chain is F-box/WD repeat-containing protein 2 (454 aa).

Positions 54 to 101 (RDFLKLLPLELSFYLLKWLDPQTLLTCCLVSKQWNKVISACTEVWQTA) constitute an F-box domain. WD repeat units lie at residues 146–183 (GHSA…CVYG), 185–221 (QTHT…RTQH), 224–265 (GHTG…NTLT), and 276–314 (LQQC…NCKC). Lysine 298 is modified (N6-acetyllysine).

In terms of assembly, directly interacts with SKP1 and CUL1.

Substrate-recognition component of the SCF (SKP1-CUL1-F-box protein)-type E3 ubiquitin ligase complex. The protein is F-box/WD repeat-containing protein 2 of Rattus norvegicus (Rat).